The chain runs to 243 residues: Thiamin pyrophosphokinase 1 (243 aa).

This sequence belongs to the thiamine pyrophosphokinase family.

It carries out the reaction thiamine + ATP = thiamine diphosphate + AMP + H(+). Its pathway is cofactor biosynthesis; thiamine diphosphate biosynthesis; thiamine diphosphate from thiamine: step 1/1. Catalyzes the phosphorylation of thiamine to thiamine pyrophosphate. Functions cell non-autonomously. This is Thiamin pyrophosphokinase 1 from Caenorhabditis elegans.